Here is a 216-residue protein sequence, read N- to C-terminus: Corrinoid protein DSY3155 (216 aa).

The B12-binding N-terminal domain maps to methionine 1–glycine 90. Residues lysine 93–lysine 216 form the B12-binding domain. A methylcob(III)alamin-binding site is contributed by histidine 106.

Belongs to the methylamine corrinoid protein family.

In terms of biological role, probably harbors a corrinoid prosthetic group and acts as a methyl group carrier between MtgB and MtgA. A methyl group from glycine betaine is likely first transferred to the corrinoid prosthetic group of the enzyme by MtgB, and then transferred to tetrahydrofolate (THF) by MtgA. The methyl group may then be ultimately converted to carbon dioxide, and its oxidation would also provide reducing equivalents for anaerobic respiration. Thus, may function in the pathway that allows anaerobic methylotrophic growth of D.hafniense using glycine betaine. This is Corrinoid protein DSY3155 from Desulfitobacterium hafniense (strain Y51).